The sequence spans 96 residues: Glutamyl-tRNA(Gln) amidotransferase subunit C (96 aa).

Belongs to the GatC family. In terms of assembly, heterotrimer of A, B and C subunits.

The catalysed reaction is L-glutamyl-tRNA(Gln) + L-glutamine + ATP + H2O = L-glutaminyl-tRNA(Gln) + L-glutamate + ADP + phosphate + H(+). The enzyme catalyses L-aspartyl-tRNA(Asn) + L-glutamine + ATP + H2O = L-asparaginyl-tRNA(Asn) + L-glutamate + ADP + phosphate + 2 H(+). In terms of biological role, allows the formation of correctly charged Asn-tRNA(Asn) or Gln-tRNA(Gln) through the transamidation of misacylated Asp-tRNA(Asn) or Glu-tRNA(Gln) in organisms which lack either or both of asparaginyl-tRNA or glutaminyl-tRNA synthetases. The reaction takes place in the presence of glutamine and ATP through an activated phospho-Asp-tRNA(Asn) or phospho-Glu-tRNA(Gln). The polypeptide is Glutamyl-tRNA(Gln) amidotransferase subunit C (Deinococcus radiodurans (strain ATCC 13939 / DSM 20539 / JCM 16871 / CCUG 27074 / LMG 4051 / NBRC 15346 / NCIMB 9279 / VKM B-1422 / R1)).